Here is a 586-residue protein sequence, read N- to C-terminus: Arginine--tRNA ligase (586 aa).

Residues 128-138 carry the 'HIGH' region motif; sequence ANPTGPLHVGH.

The protein belongs to the class-I aminoacyl-tRNA synthetase family. As to quaternary structure, monomer.

It is found in the cytoplasm. It carries out the reaction tRNA(Arg) + L-arginine + ATP = L-arginyl-tRNA(Arg) + AMP + diphosphate. The protein is Arginine--tRNA ligase of Legionella pneumophila (strain Corby).